Consider the following 427-residue polypeptide: UPF0229 protein YeaH (427 aa).

Over residues 79 to 90 the composition is skewed to basic and acidic residues; that stretch reads NDHFVQNDRIER. The disordered stretch occupies residues 79–110; it reads NDHFVQNDRIERPQGGGGGSGSGQGQASQDGE. Gly residues predominate over residues 92-102; that stretch reads QGGGGGSGSGQ.

The protein belongs to the UPF0229 family.

This chain is UPF0229 protein YeaH, found in Escherichia coli O139:H28 (strain E24377A / ETEC).